The following is a 79-amino-acid chain: MDNIEQRVKKIVAEQLGVAEAEIKNEASFVNDLGADSLDTVELVMALEDEFGMEIPDEEAEKITTVQQAIDYARANVKA.

Residues 2–77 form the Carrier domain; the sequence is DNIEQRVKKI…QAIDYARANV (76 aa). At Ser37 the chain carries O-(pantetheine 4'-phosphoryl)serine.

This sequence belongs to the acyl carrier protein (ACP) family. Post-translationally, 4'-phosphopantetheine is transferred from CoA to a specific serine of apo-ACP by AcpS. This modification is essential for activity because fatty acids are bound in thioester linkage to the sulfhydryl of the prosthetic group.

It is found in the cytoplasm. The protein operates within lipid metabolism; fatty acid biosynthesis. Functionally, carrier of the growing fatty acid chain in fatty acid biosynthesis. This is Acyl carrier protein from Burkholderia cenocepacia (strain HI2424).